The primary structure comprises 106 residues: HIG1 domain family member 2B (106 aa).

At 1–46 (MATLGFVTPEAPFESSKPPIFEGLSPTVYSNPEGFKEKFLRKTREN) the chain is on the cytoplasmic side. The HIG1 domain maps to 20–106 (IFEGLSPTVY…LAATAMKSPP (87 aa)). The chain crosses the membrane as a helical span at residues 47 to 67 (PVVPIGFLCTAAVLTNGLYCF). Topologically, residues 68 to 81 (HQGNSQCSRLMMHT) are extracellular. A helical transmembrane segment spans residues 82 to 102 (QIAAQGFTIAAILLGLAATAM). Residues 103-106 (KSPP) lie on the Cytoplasmic side of the membrane.

The protein resides in the membrane. The protein is HIG1 domain family member 2B (HIGD2B) of Homo sapiens (Human).